A 261-amino-acid chain; its full sequence is MAHSIKEVKALLKEIHNLKALDASEWNKDERKGVQQAIASRRKQLEKESALVAHYEEMTRYEENILSDNPEAVICGIDEVGRGPLAGPVVACAVILNADHAYYGLDDSKKVSAANRQKLSEALIEKTTAYAYGIATPEEIDDLNIYQATQVAMMRAIENLNVTPTHLLIDAMELPLDIAQTSIIKGDAKSVSIAAASILAKEHRDTYMRQLAEQYPGYDFEHNVGYGTKAHLEGIKRLGIIPEHRKSFEPIKSIVLEKLDI.

The region spanning 72-260 (AVICGIDEVG…IKSIVLEKLD (189 aa)) is the RNase H type-2 domain. A divalent metal cation is bound by residues Asp-78, Glu-79, and Asp-170.

This sequence belongs to the RNase HII family. Requires Mn(2+) as cofactor. It depends on Mg(2+) as a cofactor.

Its subcellular location is the cytoplasm. It catalyses the reaction Endonucleolytic cleavage to 5'-phosphomonoester.. Functionally, endonuclease that specifically degrades the RNA of RNA-DNA hybrids. The chain is Ribonuclease HII from Staphylococcus carnosus (strain TM300).